The sequence spans 917 residues: MATNFLTKIFGSRNDRLLKQYRKTVVHINALEPEYEQMSHEQLRAKTQEFKERVARGESLESILPAAFALVREGSKRIMKMRHFDVQLLGGMALHFGKIAEMRTGEGKTLTATLPVYLNALSGKGVHVVTVNDYLAHRDAQWMGRLYNFLGLTVGINLPNMPRAEKQAAYRADITYGTNNEYGFDYLRDNMVYEAQDRVQQGLNYAIVDEVDSILIDEARTPLIISGQAEDHQALYVTMNQLVPQLVRQEGEADLRTGEGVTRLGDFTLDEKSHQVFLTEQGHETAERIFASHGLIAEGASVYDPANIALMHHLYAALRARHLYHRDQHYVVQNDEIVIVDEFTGRLMSGRRWSEGLHQAVEAKEGVTIQAENQTLASITFQNYFRLYHKLAGMTGTADTEAYEFQEIYGLETMVIPPNRPSRRNDQLDLVYKTTREKYAAAVMDIRACHERGQPVLVGTTSIENSEIIDQLLSQEGLPHQVLNAKQHAREADIVAQAGRAGMITIATNMAGRGTDIVLGGNVEKDVAAIEADTALSEAERAARISALRAQWQIEHEKVKALGGLRIIATERHESRRIDNQLRGRSGRQGDPGSSRFYLGLDDALMRIFAGERVKAIMDRLKMPDGEAIEAGIVTRSIESAQRKVEARNFDIRKQLLEYDDVANDQRKVIYQQRNEILDASDLSDLIAAMREDCMTDLVRQYVPAESMEEQWDLPTLEKRLASEWQLTMALQELVQGANAITDDEILDRVRQAAKAAFDAKVEQVGRENFTQFERMVLLQNFDTQWRDHLSALDYLRQGIHLRGYAQKQPKQEYKREAFELFRQLIDRVKNEVTKLLMTVQVQSPTQLEQAAQDMESRAESIANVTYTAPTDTGQVEATLAAQMAERPLPQGMRVGRNDRCPCGSGKKYKHCHGKLA.

ATP-binding positions include Gln-87, 105–109 (GEGKT), and Asp-516. Zn(2+) contacts are provided by Cys-901, Cys-903, Cys-912, and His-913.

This sequence belongs to the SecA family. As to quaternary structure, monomer and homodimer. Part of the essential Sec protein translocation apparatus which comprises SecA, SecYEG and auxiliary proteins SecDF-YajC and YidC. Zn(2+) serves as cofactor.

Its subcellular location is the cell inner membrane. It is found in the cytoplasm. The enzyme catalyses ATP + H2O + cellular proteinSide 1 = ADP + phosphate + cellular proteinSide 2.. Part of the Sec protein translocase complex. Interacts with the SecYEG preprotein conducting channel. Has a central role in coupling the hydrolysis of ATP to the transfer of proteins into and across the cell membrane, serving both as a receptor for the preprotein-SecB complex and as an ATP-driven molecular motor driving the stepwise translocation of polypeptide chains across the membrane. In Verminephrobacter eiseniae (strain EF01-2), this protein is Protein translocase subunit SecA.